The chain runs to 132 residues: uncharacterized protein (132 aa).

The presence of the two linear plasmids, termed pGKL1 and pGKL2, in strains of Kluyveromyces lactis confers the killer phenotype to the host cell, by promoting the secretion of a toxin able to inhibit the growth of sensitive strains. This is an uncharacterized protein from Kluyveromyces lactis (strain ATCC 8585 / CBS 2359 / DSM 70799 / NBRC 1267 / NRRL Y-1140 / WM37) (Yeast).